Consider the following 222-residue polypeptide: Ribonuclease T (222 aa).

One can recognise an Exonuclease domain in the interval 20 to 194 (VVIDVETAGF…YDTERTAELF (175 aa)). Positions 23, 25, 181, and 186 each coordinate Mg(2+). Histidine 181 acts as the Proton donor/acceptor in catalysis.

This sequence belongs to the RNase T family. In terms of assembly, homodimer. Mg(2+) serves as cofactor.

Functionally, trims short 3' overhangs of a variety of RNA species, leaving a one or two nucleotide 3' overhang. Responsible for the end-turnover of tRNA: specifically removes the terminal AMP residue from uncharged tRNA (tRNA-C-C-A). Also appears to be involved in tRNA biosynthesis. The sequence is that of Ribonuclease T from Shewanella sp. (strain MR-4).